Consider the following 77-residue polypeptide: MKLIIFTGLVLFSIVSLIEAQAENEKPCLPEYKVCTHAPGNCCSDLVCDCYGRYKSGAQIGRNCFCLQKGVIYKREN.

An N-terminal signal peptide occupies residues 1-20; it reads MKLIIFTGLVLFSIVSLIEA. Positions 21 to 26 are excised as a propeptide; it reads QAENEK.

This sequence belongs to the neurotoxin 19 (CSTX) family. 08 (U8-Lctx) subfamily. Post-translationally, contains 4 disulfide bonds. Expressed by the venom gland.

It is found in the secreted. This chain is U8-lycotoxin-Ls1m, found in Lycosa singoriensis (Wolf spider).